A 159-amino-acid chain; its full sequence is SsrA-binding protein (159 aa).

The segment at 131-159 (KGKKLHDKRESEKERDWNRQKSRLLKDNG) is disordered. Positions 137–159 (DKRESEKERDWNRQKSRLLKDNG) are enriched in basic and acidic residues.

It belongs to the SmpB family.

It is found in the cytoplasm. Required for rescue of stalled ribosomes mediated by trans-translation. Binds to transfer-messenger RNA (tmRNA), required for stable association of tmRNA with ribosomes. tmRNA and SmpB together mimic tRNA shape, replacing the anticodon stem-loop with SmpB. tmRNA is encoded by the ssrA gene; the 2 termini fold to resemble tRNA(Ala) and it encodes a 'tag peptide', a short internal open reading frame. During trans-translation Ala-aminoacylated tmRNA acts like a tRNA, entering the A-site of stalled ribosomes, displacing the stalled mRNA. The ribosome then switches to translate the ORF on the tmRNA; the nascent peptide is terminated with the 'tag peptide' encoded by the tmRNA and targeted for degradation. The ribosome is freed to recommence translation, which seems to be the essential function of trans-translation. The sequence is that of SsrA-binding protein from Rhizobium leguminosarum bv. trifolii (strain WSM2304).